Reading from the N-terminus, the 217-residue chain is Ribonuclease HII (217 aa).

An RNase H type-2 domain is found at 17-207 (KVIYGVDEAG…CVGQSVSGAR (191 aa)). A divalent metal cation is bound by residues Asp23, Glu24, and Asp116.

The protein belongs to the RNase HII family. It depends on Mn(2+) as a cofactor. Mg(2+) is required as a cofactor.

The protein localises to the cytoplasm. The enzyme catalyses Endonucleolytic cleavage to 5'-phosphomonoester.. Functionally, endonuclease that specifically degrades the RNA of RNA-DNA hybrids. The polypeptide is Ribonuclease HII (Nitrosomonas europaea (strain ATCC 19718 / CIP 103999 / KCTC 2705 / NBRC 14298)).